Here is a 301-residue protein sequence, read N- to C-terminus: Phosphatidylserine decarboxylase proenzyme (301 aa).

Catalysis depends on charge relay system; for autoendoproteolytic cleavage activity residues aspartate 117, histidine 173, and serine 260. The active-site Schiff-base intermediate with substrate; via pyruvic acid; for decarboxylase activity is the serine 260. Residue serine 260 is modified to Pyruvic acid (Ser); by autocatalysis.

This sequence belongs to the phosphatidylserine decarboxylase family. PSD-B subfamily. Prokaryotic type II sub-subfamily. Heterodimer of a large membrane-associated beta subunit and a small pyruvoyl-containing alpha subunit. Pyruvate serves as cofactor. Post-translationally, is synthesized initially as an inactive proenzyme. Formation of the active enzyme involves a self-maturation process in which the active site pyruvoyl group is generated from an internal serine residue via an autocatalytic post-translational modification. Two non-identical subunits are generated from the proenzyme in this reaction, and the pyruvate is formed at the N-terminus of the alpha chain, which is derived from the carboxyl end of the proenzyme. The autoendoproteolytic cleavage occurs by a canonical serine protease mechanism, in which the side chain hydroxyl group of the serine supplies its oxygen atom to form the C-terminus of the beta chain, while the remainder of the serine residue undergoes an oxidative deamination to produce ammonia and the pyruvoyl prosthetic group on the alpha chain. During this reaction, the Ser that is part of the protease active site of the proenzyme becomes the pyruvoyl prosthetic group, which constitutes an essential element of the active site of the mature decarboxylase.

It is found in the cell membrane. It catalyses the reaction a 1,2-diacyl-sn-glycero-3-phospho-L-serine + H(+) = a 1,2-diacyl-sn-glycero-3-phosphoethanolamine + CO2. The protein operates within phospholipid metabolism; phosphatidylethanolamine biosynthesis; phosphatidylethanolamine from CDP-diacylglycerol: step 2/2. Its function is as follows. Catalyzes the formation of phosphatidylethanolamine (PtdEtn) from phosphatidylserine (PtdSer). The chain is Phosphatidylserine decarboxylase proenzyme from Chlamydia muridarum (strain MoPn / Nigg).